Here is a 563-residue protein sequence, read N- to C-terminus: Probable Xaa-Pro aminopeptidase PEPP (563 aa).

Positions 331, 342, 491, and 532 each coordinate Mn(2+).

Belongs to the peptidase M24B family. The cofactor is Mn(2+).

It carries out the reaction Release of any N-terminal amino acid, including proline, that is linked to proline, even from a dipeptide or tripeptide.. Its function is as follows. Catalyzes the removal of a penultimate prolyl residue from the N-termini of peptides. In Verticillium alfalfae (strain VaMs.102 / ATCC MYA-4576 / FGSC 10136) (Verticillium wilt of alfalfa), this protein is Probable Xaa-Pro aminopeptidase PEPP (PEPP).